An 82-amino-acid chain; its full sequence is Small ribosomal subunit protein uS17 (82 aa).

It belongs to the universal ribosomal protein uS17 family. In terms of assembly, part of the 30S ribosomal subunit.

In terms of biological role, one of the primary rRNA binding proteins, it binds specifically to the 5'-end of 16S ribosomal RNA. This is Small ribosomal subunit protein uS17 from Phenylobacterium zucineum (strain HLK1).